The sequence spans 204 residues: Protein GET1 (204 aa).

The Lumenal segment spans residues 1 to 4; the sequence is MPSL. Residues 5 to 24 form a helical membrane-spanning segment; sequence LLIIFVTELVVQLVNTLGAT. Over 25-110 the chain is Cytoplasmic; sequence TINDLLWRIY…KFDRTLTTTR (86 aa). Residues 72–107 adopt a coiled-coil conformation; that stretch reads AKWAKLRRQHDKLLEDLEKKKASLEAARTKFDRTLT. Residues 111–131 form a helical membrane-spanning segment; it reads TVSTRSVQWFLPFWYSKEPMF. The Lumenal segment spans residues 132 to 155; that stretch reads WLPYGWFPYYVEWFASFPRAPMGS. Residues 156–172 traverse the membrane as a helical segment; it reads VSIVVWQWACTAVIALM. At 173–204 the chain is on the cytoplasmic side; sequence IEAATAALVYVAAKQSQKIRQPVPAQSEKKDS.

It belongs to the WRB/GET1 family. As to quaternary structure, interacts with GET3.

It localises to the endoplasmic reticulum membrane. Functionally, required for the post-translational delivery of tail-anchored (TA) proteins to the endoplasmic reticulum. Acts as a membrane receptor for soluble GET3, which recognizes and selectively binds the transmembrane domain of TA proteins in the cytosol. This chain is Protein GET1, found in Podospora anserina (strain S / ATCC MYA-4624 / DSM 980 / FGSC 10383) (Pleurage anserina).